The sequence spans 319 residues: Lipooligosaccharide heptosyltransferase 2 (319 aa).

This sequence belongs to the glycosyltransferase 9 family.

The catalysed reaction is an L-alpha-D-Hep-(1-&gt;5)-[alpha-Kdo-(2-&gt;4)]-alpha-Kdo-(2-&gt;6)-lipid A + ADP-L-glycero-beta-D-manno-heptose = an L-alpha-D-Hep-(1-&gt;3)-L-alpha-D-Hep-(1-&gt;5)-[alpha-Kdo-(2-&gt;4)]-alpha-Kdo-(2-&gt;6)-lipid A + ADP + H(+). The protein operates within bacterial outer membrane biogenesis; LOS core biosynthesis. In terms of biological role, glycosyltransferase involved in the biosynthesis of the core oligosaccharide region of lipooligosaccharide (LOS). Catalyzes the addition of the second heptose unit to the heptosyl-Kdo2-lipid A module. The polypeptide is Lipooligosaccharide heptosyltransferase 2 (Campylobacter jejuni subsp. jejuni serotype O:2 (strain ATCC 700819 / NCTC 11168)).